The following is a 560-amino-acid chain: Putative transport protein ESA_02488 (560 aa).

Helical transmembrane passes span Leu8–Gly28, Leu32–Gln52, Phe66–Phe86, Asn91–Gly111, and His158–Ala178. RCK C-terminal domains follow at residues Arg200–Asn288 and Val292–Phe373. 5 helical membrane passes run Leu383 to Phe403, Phe406 to Leu426, Phe447 to Gly467, Met475 to Ala495, and Tyr539 to Gly559.

The protein belongs to the AAE transporter (TC 2.A.81) family. YbjL subfamily.

It localises to the cell membrane. The protein is Putative transport protein ESA_02488 of Cronobacter sakazakii (strain ATCC BAA-894) (Enterobacter sakazakii).